A 2631-amino-acid polypeptide reads, in one-letter code: MSQKQKPIRFQDYQFTATKDEAYGRSDRYVKQFLNKNLLKKKDGTLGTAEELLTLIQQSNINVVTASTGGAAMGAMLNHTVSTINLTGSGSVPTYNPSDNRNSGSHVITSTNSVISNSSISSTGVINNNINNNSNINSNTGTTTTTISLPNNTEIKTALVSTGSQNASDTAQIDIEFHLSYTQLVTLPPSIFSLIWIQKLVLTHHNIKTLSEDIGKLQQLQVLVLENNRLINLPQSIGDLVNLKRLEVDNNHLVSLCSLERLSKLEVLSVNNNKLTLLPTSIASLSSLKTLNIKSNPIITPPSTVVSKGLKDIVSFLRELETGARPCLRSKLVVLGDPGVGKTSVVQCMKGKKKKTNVTSSSINIGGSSGSEVGIEIDQYDFDVVFDEDDKKRRVITLSTWDIANQDVYFASSQLFDSERSVYIVVFNLNNDDFSAIEYWLHCIMSTSPNSPIVLVGTHIDAFENLNVVNAVLESVASRFQKRFTNIQAIISVSCTTGYDVDKLRQLIEDIIKTQPYLKEKVPSSFFTLEEALIEVKKKRIPPVMMWQEYINLANICNLKDSVQIQRATEFLHNIGSIVYFNDLNSSTVGKMVILDQQWIINCMSSLITSKLLINNCNGIVRQSDLELVWKAPTYPEHLHPALLSIMQAFEICRSLSPSDLVRPEEVNEKEVMGDRNLVPNLLSDNTNIVAQWDDFIDPDTILLNRQYHLPFLPEKFFGKLIIHLMNFTKVESCQKRAVILRNQDNHEALIELKTIKDNKDGTFKKILTVDVRGLVSPVSLLRIVTDTIESLFSQWYKLDIKRYISCYECAILYDRNPTLFTIEECELAVIDGKTVLTCNQKSDSDRVSTSHRLKLDILAPDISMVDIPIPRFNLSEVKINKEVGRGAFGIVYEAEWMSEWIALKKLLLPSSTDTTNLNGNGEVMVYDDPDQLIEDRLRVFREFRHEVYYMSGLNHPNVMKISGFCIQPLCMALEYVRYGSLYSLLSNSSIEISWGLRLQIASEIAKGMQHLHSHNPPVIHRDLKSPNILLNGITEGQNSVATIIDFGTSTALYGGAALIRCVDQPLWLGPEVLAGTAYSEPSDVYSFGIILWELYTRAHPFDEFQFGQWMSKLEDEIIRGLRPTIPPTCPPEYVELIQSCWTHEPNSRPTFTSIVEILGQIKKKFAPLPFTHPPHIRNMMRKSRSSSISEAMLPSNLLHLNLNGINNNNNNSNNNNNSIPVTTISLTSSGTSPTNSPVGGLLSQSLTQPITSGGSTSGILSTSVNRDNSSLVSASSLGNNTSTSSLASLVSNNSGLHHSPSASDGLNDYYGADNNNNNNDSTMDFFQDIFTEEENEQPYPFADDDQQKGILFGFDEEQTNPSASSVSIIIAATMAKMIEMMTKGESSATLKSEHISTRRRSDTAGKNGVPPHWRNSVPLSTNSSTTLDETFIDDFIYVYRSFTTPRNIFKLLVRRFFGPRHTDKVDTFTIKKFEQKKAAIRQGIAVFLRKWVADITELEFRQEEFWLYHNTVAFTKQFIASEFPTIATQIYGTLTTHEDEVNLTNQRFLQIAFSESEIQIDRAMSSMQLTTPKPFRSQKNLANSYNSQSGGGDSSFYYQPSSNDVSRVFLNLATGMRDPLLGITVKEKKFKKDKVSTLCCSGSEIIDWITKCMPIKREEASILVLDMLMKQFFIQISDDGIPISNQKGTNPTFSDSPTSFYMFLEDDPELIARQYTFLELKYLQNIHPRELLGFSVGLVMPNENEKDPEKWRQSNFPHIYDYFRWFNKMTMLVSTEILRQRDIKQRASIIEKYISIALEYLSLWNFNGIMQVLSSLHSEPISRLSATWAKVSQRSMDCFYELSRLMLPESNYLPLRTALASQKPNTIIQASPLYPNISAYMVHTVCPTIPFLGALIADLSQTCTENPTFISSGGEKMINILRVKRLSKKMKMFKEYKEMPTQYLPALTTIPLQYYEHYVNDLKALDSLQIDRLSDIERKLEIICEKNGTTNDDKEKGDENGGGLTSSNFFGNGSDELTERDWTILLTNASVIAYNRGDVVMEENAINTHLYRIKSGAISVEKKDKEGINCKVATMFAPKMFGEMSFLGNKTTARLTVDEESDLYVMDIPFLNNLFNGHPRLGAKFYKIMANQLAIRLKNLPWSKPKNTTGGSSSSNQSAGPDNILGTTPTGISSSGGGLTSLLNQNLSSIMSLSNSNTPPASPRVMTTPTLPSPPAPLQSPPTSGISSPTTTTSTTTDQQKINNTIFQNVHPTINVHRTSSSANLVSPHGRPSNSGFGHSSGGERTINKDPHQRDSGSMDKPILSLGSGGTPRGDGARSGSISYLGRTQTSTSPLNEGLSGGQQPVMKKNDQEFCQRFALVDEIVIKDYPCSLNRSGRLYISQQHVCFYSKFFGYKTKKVIPFKNIDKLICINVNQIELTRLKNTVPSNYRLTFQTGKDREDAFSMIHILWDSSKVSNSSSDEIKNKLAAERKKVNNLTLKTRSNKNKGDELTKEDWELIGCEGSRSSTFKKDEVIIREGERMQKIFQIGKGVCRIEKSVPVAPGSSEMKKVVLGTMKQDDTFGEITYLLNGETTADVIADTDQTEVYTIEGQFVNILFDLNPALASKWFKYLATALNKTLIERESQLYA.

LRR repeat units lie at residues 170–194, 196–217, 218–240, 242–262, 263–285, and 287–308; these read TAQI…IFSL, WIQK…IGKL, QQLQ…IGDL, NLKR…LERL, SKLE…IASL, and SLKT…VVSK. Residues 323-515 enclose the Roc domain; sequence GARPCLRSKL…QLIEDIIKTQ (193 aa). GTP-binding positions include 336-343, 402-406, and 458-461; these read GDPGVGKT, DIANQ, and THID. The 219-residue stretch at 523–741 folds into the COR domain; the sequence is PSSFFTLEEA…ESCQKRAVIL (219 aa). Residues 878–1172 enclose the Protein kinase domain; that stretch reads VKINKEVGRG…KKKFAPLPFT (295 aa). ATP is bound by residues 884 to 892 and Lys905; that span reads VGRGAFGIV. The active-site Proton acceptor is the Asp1023. Positions 1225-1250 are enriched in polar residues; the sequence is ISLTSSGTSPTNSPVGGLLSQSLTQP. Disordered stretches follow at residues 1225-1263 and 1387-1418; these read ISLT…ILST and SSAT…RNSV. A compositionally biased stretch (low complexity) spans 1251–1263; it reads ITSGGSTSGILST. The N-terminal Ras-GEF domain maps to 1366 to 1539; it reads SVSIIIAATM…QIYGTLTTHE (174 aa). Basic and acidic residues predominate over residues 1392–1404; it reads KSEHISTRRRSDT. The DEP domain occupies 1620-1706; it reads PLLGITVKEK…SPTSFYMFLE (87 aa). In terms of domain architecture, Ras-GEF spans 1708–1971; sequence DPELIARQYT…DLKALDSLQI (264 aa). Positions 1989–2013 are disordered; it reads GTTNDDKEKGDENGGGLTSSNFFGN. Residue 2014–2133 participates in a nucleoside 3',5'-cyclic phosphate binding; that stretch reads GSDELTERDW…AKFYKIMANQ (120 aa). 3 disordered regions span residues 2142-2180, 2192-2239, and 2263-2346; these read PWSK…GGGL, MSLS…TTTD, and SANL…GQQP. Over residues 2144–2174 the composition is skewed to low complexity; the sequence is SKPKNTTGGSSSSNQSAGPDNILGTTPTGIS. The span at 2212-2221 shows a compositional bias: pro residues; the sequence is LPSPPAPLQS. The segment covering 2222–2238 has biased composition (low complexity); sequence PPTSGISSPTTTTSTTT. Residues 2287–2299 show a composition bias toward basic and acidic residues; it reads TINKDPHQRDSGS. Polar residues predominate over residues 2321–2336; it reads GSISYLGRTQTSTSPL. In terms of domain architecture, GRAM spans 2354 to 2414; sequence EFCQRFALVD…KNIDKLICIN (61 aa). 2490–2616 is an a nucleoside 3',5'-cyclic phosphate binding site; sequence GDELTKEDWE…ASKWFKYLAT (127 aa).

This sequence belongs to the protein kinase superfamily. TKL Ser/Thr protein kinase family. ROCO subfamily.

It carries out the reaction L-seryl-[protein] + ATP = O-phospho-L-seryl-[protein] + ADP + H(+). The enzyme catalyses L-threonyl-[protein] + ATP = O-phospho-L-threonyl-[protein] + ADP + H(+). Promotes the exchange of Ras-bound GDP by GTP. Required for cyclic GMP-mediated chemotaxis, polarity. Plays a key role in cyclic AMP-induced myosin II translocation to the cortex. Also involved in the phosphorylation of mlkA and mlcR, either directly or via an intermediate kinase. The protein is Cyclic GMP-binding protein C (gbpC) of Dictyostelium discoideum (Social amoeba).